The following is a 217-amino-acid chain: Coiled-coil domain-containing protein 124 (217 aa).

The segment at 1-120 (MPKKFQGENS…PVEKAKSHLE (120 aa)) is disordered. Positions 15–82 (ARARRAEAKA…LLEEEDSRLK (68 aa)) form a coiled coil. Basic and acidic residues-rich tracts occupy residues 18 to 74 (RRAE…QRLL) and 98 to 120 (QIEDSLRREQRAEPVEKAKSHLE). Phosphoserine occurs at positions 136 and 188.

Belongs to the CCDC124 family. In terms of assembly, associates with translationally inactive ribosomes in the nonrotated state. Interacts with RASGEF1B.

The protein resides in the cytoplasm. The protein localises to the cytoskeleton. Its subcellular location is the microtubule organizing center. It is found in the centrosome. It localises to the midbody. Ribosome-binding protein involved in ribosome hibernation: associates with translationally inactive ribosomes and stabilizes the nonrotated conformation of the 80S ribosome, thereby promoting ribosome preservation and storage. Also required for proper progression of late cytokinetic stages. In Mus musculus (Mouse), this protein is Coiled-coil domain-containing protein 124 (Ccdc124).